We begin with the raw amino-acid sequence, 388 residues long: MAFQLTPLRVALVAGEPSGDLLGASLLGGLHARLPASSRYYGIGGPRMSAVEFDAHWPMEKLAVRGYVEALKHIPEILRIRGELKRQLLAEPPDAFVGIDAPDFNFGLEQALRGAGIPTIHFVCPSIWAWRGGRIKKIVKAVDHMLCLFPFEPELLEKAGVAATFVGHPLADEIPLEPDTHGARIALGLPGGGPVIAVLPGSRRSEIELIGPTFFDAMELMQQREPGVRFVVPAATPALRALLQPLVDAHPSLSVTLTEGRAQVAMTAADAILVKSGTVTLEAALLKKPMVISYKVPWLTGQIMRRQGYLPYVGLPNILAGRFVVPELLQHFATPDALADATLTQLRDDANRRALADIFTDMHLALRQNTAQRAAEAVAHVIDSRKPR.

This sequence belongs to the LpxB family.

It catalyses the reaction a lipid X + a UDP-2-N,3-O-bis[(3R)-3-hydroxyacyl]-alpha-D-glucosamine = a lipid A disaccharide + UDP + H(+). Its pathway is bacterial outer membrane biogenesis; LPS lipid A biosynthesis. In terms of biological role, condensation of UDP-2,3-diacylglucosamine and 2,3-diacylglucosamine-1-phosphate to form lipid A disaccharide, a precursor of lipid A, a phosphorylated glycolipid that anchors the lipopolysaccharide to the outer membrane of the cell. The chain is Lipid-A-disaccharide synthase from Burkholderia mallei (strain ATCC 23344).